A 90-amino-acid chain; its full sequence is Small ribosomal subunit protein bS16 (90 aa).

This sequence belongs to the bacterial ribosomal protein bS16 family.

This is Small ribosomal subunit protein bS16 from Bacillus licheniformis (strain ATCC 14580 / DSM 13 / JCM 2505 / CCUG 7422 / NBRC 12200 / NCIMB 9375 / NCTC 10341 / NRRL NRS-1264 / Gibson 46).